The chain runs to 377 residues: 3-(aryl)acrylate reductase (377 aa).

Residues 121-130 (FALTEPGAGS), 154-156 (FIT), R266, Q277, and 334-338 (QIHGG) contribute to the FAD site. E361 serves as the catalytic Proton acceptor. 363-365 (TSE) is a binding site for FAD.

This sequence belongs to the acyl-CoA dehydrogenase family. FAD serves as cofactor.

The catalysed reaction is 3-phenylpropanoate + oxidized [electron-transfer flavoprotein] + H(+) = (E)-cinnamate + reduced [electron-transfer flavoprotein]. It carries out the reaction phloretate + oxidized [electron-transfer flavoprotein] + H(+) = (E)-4-coumarate + reduced [electron-transfer flavoprotein]. It catalyses the reaction indole-3-propanoate + oxidized [electron-transfer flavoprotein] + H(+) = (E)-3-(indol-3-yl)acrylate + reduced [electron-transfer flavoprotein]. It participates in amino-acid degradation. In terms of biological role, essential for the reductive metabolism of L-phenylalanine, L-tyrosine and L-tryptophan. Catalyzes the reduction of phenylacrylic acid to phenylpropionic acid, 4-hydroxy-phenylacrylic acid to 4-hydroxy-phenylpropionic acid, and indoleacrylic acid to indolepropionic acid. The protein is 3-(aryl)acrylate reductase of Clostridium sporogenes (strain ATCC 15579).